The primary structure comprises 245 residues: Zinc finger protein 575 (245 aa).

The disordered stretch occupies residues 1-67; the sequence is MLERGAESAA…PPQRPHRCPD (67 aa). Residues 36-49 are compositionally biased toward low complexity; sequence PSQSAPGPTASAGS. Residues 52–63 are compositionally biased toward basic residues; that stretch reads RPRRRPPPQRPH. C2H2-type zinc fingers lie at residues 63-85, 91-113, 119-141, 147-169, 177-199, and 213-240; these read HRCPDCDKAFSYPSKLATHRLAH, HPCPDCPKAFSYPSKLAAHRLTH, HPCPHCPKSFGHRSKLAAHLWTH, YPCPDCPKSFCYPSKLAAHRHTH, YPCPHCPKAFSFPSKLAAHRLCH, and HRCSSCGQAFGQRRLLLLHQRSHHQVEH.

The protein belongs to the krueppel C2H2-type zinc-finger protein family.

The protein resides in the nucleus. Its function is as follows. May be involved in transcriptional regulation. This is Zinc finger protein 575 (ZNF575) from Homo sapiens (Human).